We begin with the raw amino-acid sequence, 409 residues long: Peptidase T (409 aa).

Histidine 78 contacts Zn(2+). Aspartate 80 is a catalytic residue. Aspartate 140 contacts Zn(2+). Glutamate 173 functions as the Proton acceptor in the catalytic mechanism. Zn(2+) is bound by residues glutamate 174, aspartate 196, and histidine 379.

This sequence belongs to the peptidase M20B family. It depends on Zn(2+) as a cofactor.

Its subcellular location is the cytoplasm. The enzyme catalyses Release of the N-terminal residue from a tripeptide.. Cleaves the N-terminal amino acid of tripeptides. In Escherichia coli O139:H28 (strain E24377A / ETEC), this protein is Peptidase T.